Consider the following 280-residue polypeptide: ATP synthase subunit a (280 aa).

The next 7 helical transmembrane spans lie at 45–65 (AINVDSMLFSIGLGVLFLFLF), 105–125 (LVAPLALTVFMWVFLMNLMDL), 126–146 (LPVDWLPYVATMAGIPYLKVV), 159–179 (LSIFFLVLYYSVKMKGAGGFF), 190–210 (FLFPVNLLLEGVGLIAKPISL), 223–243 (MIFILIALMFGGGWVLALFGG), and 250–270 (AVFHILIITLQAFIFMTLTIV).

Belongs to the ATPase A chain family. In terms of assembly, F-type ATPases have 2 components, CF(1) - the catalytic core - and CF(0) - the membrane proton channel. CF(1) has five subunits: alpha(3), beta(3), gamma(1), delta(1), epsilon(1). CF(0) has three main subunits: a(1), b(2) and c(9-12). The alpha and beta chains form an alternating ring which encloses part of the gamma chain. CF(1) is attached to CF(0) by a central stalk formed by the gamma and epsilon chains, while a peripheral stalk is formed by the delta and b chains.

It is found in the cell inner membrane. In terms of biological role, key component of the proton channel; it plays a direct role in the translocation of protons across the membrane. This chain is ATP synthase subunit a, found in Thiobacillus denitrificans (strain ATCC 25259 / T1).